We begin with the raw amino-acid sequence, 99 residues long: Transmembrane protein 14A (99 aa).

3 helical membrane passes run Met1–Lys21, Gly24–Tyr44, and Pro79–Leu99.

It belongs to the TMEM14 family. As to expression, expressed at significantly higher levels in ovarian cancer tissues than in normal tissues (at protein level).

It localises to the mitochondrion membrane. Its subcellular location is the endoplasmic reticulum membrane. In terms of biological role, inhibits apoptosis via negative regulation of the mitochondrial outer membrane permeabilization involved in apoptotic signaling pathway. The sequence is that of Transmembrane protein 14A (TMEM14A) from Homo sapiens (Human).